We begin with the raw amino-acid sequence, 211 residues long: Ribonuclease MRP protein subunit rmp1 (211 aa).

Residues 73 to 93 (PALGLVLLGILARVWFVMGGI) form a helical membrane-spanning segment. Ser-156 is subject to Phosphoserine. The segment at 178-211 (SQGTKRKSKNSNSTVKKKKKRARKGRDEIDDIFG) is disordered. Basic residues predominate over residues 181–201 (TKRKSKNSNSTVKKKKKRARK).

Component of RNase MRP complex which consists of an RNA moiety and at least 10 protein subunits.

It is found in the membrane. The protein resides in the nucleus. Its subcellular location is the nucleolus. Its function is as follows. Functions as part of ribonuclease MRP (RNase MRP), which is involved in rRNA processing in mitochondria. The chain is Ribonuclease MRP protein subunit rmp1 from Schizosaccharomyces pombe (strain 972 / ATCC 24843) (Fission yeast).